The sequence spans 130 residues: Small ribosomal subunit protein bS6 (130 aa).

The segment at 100-130 (SPMVKAKDERRERREDFAEAGDDVDAGDSEE) is disordered. The segment covering 104-116 (KAKDERRERREDF) has biased composition (basic and acidic residues). Acidic residues predominate over residues 117 to 130 (AEAGDDVDAGDSEE).

Belongs to the bacterial ribosomal protein bS6 family.

In terms of biological role, binds together with bS18 to 16S ribosomal RNA. The chain is Small ribosomal subunit protein bS6 from Pectobacterium carotovorum subsp. carotovorum (strain PC1).